Reading from the N-terminus, the 139-residue chain is Probable disulfide formation protein C 2 (139 aa).

Residues Lys-6–Phe-25 form a helical membrane-spanning segment. The cysteines at positions 35 and 38 are disulfide-linked. 2 consecutive transmembrane segments (helical) span residues Tyr-40 to Lys-59 and Tyr-66 to Thr-83. An intrachain disulfide couples Cys-95 to Cys-101. A helical membrane pass occupies residues Gly-110–Ser-133.

Belongs to the DsbB family. BdbC subfamily.

Its subcellular location is the cell membrane. Required for disulfide bond formation in some proteins. In Bacillus cereus (strain ATCC 10987 / NRS 248), this protein is Probable disulfide formation protein C 2 (bdbC2).